The sequence spans 199 residues: NAD(P)H dehydrogenase (quinone) (199 aa).

The 187-residue stretch at 4 to 190 (VLVLYYSSYG…EGARHQGELV (187 aa)) folds into the Flavodoxin-like domain. Residues 10-15 (SSYGHI) and 78-80 (TRY) contribute to the FMN site. Tyrosine 12 provides a ligand contact to NAD(+). Tryptophan 98 serves as a coordination point for substrate. Residues 113 to 119 (STATQHG) and histidine 134 each bind FMN.

This sequence belongs to the WrbA family. It depends on FMN as a cofactor.

It carries out the reaction a quinone + NADH + H(+) = a quinol + NAD(+). The enzyme catalyses a quinone + NADPH + H(+) = a quinol + NADP(+). The protein is NAD(P)H dehydrogenase (quinone) of Paraburkholderia phymatum (strain DSM 17167 / CIP 108236 / LMG 21445 / STM815) (Burkholderia phymatum).